The sequence spans 179 residues: MANIAKKYAKALFDTAKDADILDDMYDEFSTINEAVQSENKKLQALDADPQKDVEQRRRFVSIVFGQTNQYLQNMLTILASNRHLGHIHEIYIAFETLYNEEHNQDYAVIESVYQLSEEELSSIEEIIKARTKLSKIMITNKINPELIGGIRVKVGTKVMDASIKNDLAQLERQFIRVK.

It belongs to the ATPase delta chain family. As to quaternary structure, F-type ATPases have 2 components, F(1) - the catalytic core - and F(0) - the membrane proton channel. F(1) has five subunits: alpha(3), beta(3), gamma(1), delta(1), epsilon(1). F(0) has three main subunits: a(1), b(2) and c(10-14). The alpha and beta chains form an alternating ring which encloses part of the gamma chain. F(1) is attached to F(0) by a central stalk formed by the gamma and epsilon chains, while a peripheral stalk is formed by the delta and b chains.

It localises to the cell membrane. F(1)F(0) ATP synthase produces ATP from ADP in the presence of a proton or sodium gradient. F-type ATPases consist of two structural domains, F(1) containing the extramembraneous catalytic core and F(0) containing the membrane proton channel, linked together by a central stalk and a peripheral stalk. During catalysis, ATP synthesis in the catalytic domain of F(1) is coupled via a rotary mechanism of the central stalk subunits to proton translocation. Functionally, this protein is part of the stalk that links CF(0) to CF(1). It either transmits conformational changes from CF(0) to CF(1) or is implicated in proton conduction. This chain is ATP synthase subunit delta, found in Staphylococcus saprophyticus subsp. saprophyticus (strain ATCC 15305 / DSM 20229 / NCIMB 8711 / NCTC 7292 / S-41).